The primary structure comprises 233 residues: Pirin-like protein YhaK (233 aa).

Belongs to the pirin family. As to quaternary structure, monomer.

It is found in the cytoplasm. Its function is as follows. Does not have quercetin 2,3-dioxygenase activity. This chain is Pirin-like protein YhaK (yhaK), found in Escherichia coli (strain K12).